A 297-amino-acid polypeptide reads, in one-letter code: ATP synthase subunit gamma, mitochondrial (297 aa).

It belongs to the ATPase gamma chain family. In terms of assembly, F-type ATPases have 2 components, CF(1) - the catalytic core - and CF(0) - the membrane proton channel. CF(1) has five subunits: alpha(3), beta(3), gamma(1), delta(1), epsilon(1). CF(0) has three main subunits: a, b and c.

It is found in the mitochondrion. Its subcellular location is the mitochondrion inner membrane. Functionally, mitochondrial membrane ATP synthase (F(1)F(0) ATP synthase or Complex V) produces ATP from ADP in the presence of a proton gradient across the membrane which is generated by electron transport complexes of the respiratory chain. F-type ATPases consist of two structural domains, F(1) - containing the extramembraneous catalytic core, and F(0) - containing the membrane proton channel, linked together by a central stalk and a peripheral stalk. During catalysis, ATP synthesis in the catalytic domain of F(1) is coupled via a rotary mechanism of the central stalk subunits to proton translocation. Part of the complex F(1) domain and the central stalk which is part of the complex rotary element. The gamma subunit protrudes into the catalytic domain formed of alpha(3)beta(3). Rotation of the central stalk against the surrounding alpha(3)beta(3) subunits leads to hydrolysis of ATP in three separate catalytic sites on the beta subunits. The sequence is that of ATP synthase subunit gamma, mitochondrial from Drosophila melanogaster (Fruit fly).